We begin with the raw amino-acid sequence, 152 residues long: Transcriptional repressor NrdR (152 aa).

The segment at 3–34 (CPKCTSIEDKVIDSRISKEGSTIRRRRECLEC) is a zinc-finger region. The ATP-cone domain maps to 49 to 139 (IVVIKRDGRR…VYKEFRDVSE (91 aa)).

It belongs to the NrdR family. Zn(2+) serves as cofactor.

Functionally, negatively regulates transcription of bacterial ribonucleotide reductase nrd genes and operons by binding to NrdR-boxes. This chain is Transcriptional repressor NrdR, found in Opitutus terrae (strain DSM 11246 / JCM 15787 / PB90-1).